The primary structure comprises 396 residues: Elongation factor Tu (396 aa).

Residues 10–206 (KPHVNVGTIG…ALDTYIPTPE (197 aa)) form the tr-type G domain. The interval 19–26 (GHVDHGKT) is G1. 19 to 26 (GHVDHGKT) is a GTP binding site. Thr26 is a binding site for Mg(2+). The tract at residues 60–64 (GITIN) is G2. The segment at 81 to 84 (DCPG) is G3. GTP-binding positions include 81–85 (DCPGH) and 136–139 (NKCD). Positions 136 to 139 (NKCD) are G4. A G5 region spans residues 174–176 (SAK).

This sequence belongs to the TRAFAC class translation factor GTPase superfamily. Classic translation factor GTPase family. EF-Tu/EF-1A subfamily. Monomer.

It is found in the cytoplasm. It carries out the reaction GTP + H2O = GDP + phosphate + H(+). In terms of biological role, GTP hydrolase that promotes the GTP-dependent binding of aminoacyl-tRNA to the A-site of ribosomes during protein biosynthesis. In Burkholderia mallei (strain NCTC 10247), this protein is Elongation factor Tu.